The chain runs to 177 residues: Acireductone dioxygenase (177 aa).

Positions 1-23 (MVRAWYMDDSDADQRAPHMTDPP) are disordered. Fe(2+)-binding residues include His86, His88, Glu92, and His131. His86, His88, Glu92, and His131 together coordinate Ni(2+).

The protein belongs to the acireductone dioxygenase (ARD) family. Fe(2+) is required as a cofactor. Ni(2+) serves as cofactor.

It is found in the cytoplasm. The protein resides in the nucleus. The enzyme catalyses 1,2-dihydroxy-5-(methylsulfanyl)pent-1-en-3-one + O2 = 4-methylsulfanyl-2-oxobutanoate + formate + 2 H(+). It catalyses the reaction 1,2-dihydroxy-5-(methylsulfanyl)pent-1-en-3-one + O2 = 3-(methylsulfanyl)propanoate + CO + formate + 2 H(+). It participates in amino-acid biosynthesis; L-methionine biosynthesis via salvage pathway; L-methionine from S-methyl-5-thio-alpha-D-ribose 1-phosphate: step 5/6. In terms of biological role, catalyzes 2 different reactions between oxygen and the acireductone 1,2-dihydroxy-3-keto-5-methylthiopentene (DHK-MTPene) depending upon the metal bound in the active site. Fe-containing acireductone dioxygenase (Fe-ARD) produces formate and 2-keto-4-methylthiobutyrate (KMTB), the alpha-ketoacid precursor of methionine in the methionine recycle pathway. Ni-containing acireductone dioxygenase (Ni-ARD) produces methylthiopropionate, carbon monoxide and formate, and does not lie on the methionine recycle pathway. This chain is Acireductone dioxygenase, found in Branchiostoma floridae (Florida lancelet).